The sequence spans 765 residues: NADPH oxidase 5 (765 aa).

Positions 1 to 77 are N-terminal lobe of N-terminal regulatory EF domain; it reads MNTSGDPAQT…LFDSDRSGTI (77 aa). Residues 1 to 161 are N-terminal regulatory EF domain; the sequence is MNTSGDPAQT…SCLRESAISL (161 aa). Over 1–238 the chain is Cytoplasmic; sequence MNTSGDPAQT…RAYWHNHRSQ (238 aa). EF-hand domains are found at residues 26–56 and 57–92; these read RWLRWVTQQFKTIAGEDGEISLQEFKAALHV and KESFFAERFFALFDSDRSGTITLQELQEALTLLIHG. The Ca(2+) site is built by Asp-42, Glu-44, Glu-49, Asp-70, Asp-72, Ser-74, Thr-76, Glu-81, and Asp-106. Positions 78–161 are C-terminal lobe of N-terminal regulatory EF domain; the sequence is TLQELQEALT…SCLRESAISL (84 aa). The EF-hand 3; atypical; contains an insert of 28 residues domain maps to 93-156; sequence SPMDKLKFLF…RTVLQSCLRE (64 aa). Ile-107 carries the post-translational modification S-nitrosocysteine. Residues Asp-108, Ser-138, Ser-140, Glu-145, Asp-178, Asp-180, Asn-182, and Glu-189 each coordinate Ca(2+). The disordered stretch occupies residues 122 to 141; sequence GAGAGPHWASSPLGTGSGSI. The region spanning 165–200 is the EF-hand 4 domain; sequence KLDQLTLALFESADADGNGAITFEELRDELQRFPGV. Residues 239–259 traverse the membrane as a helical segment; sequence LFCLATYAGLHVLLFGLAASA. The residue at position 246 (Ala-246) is an S-nitrosocysteine. At 260–266 the chain is on the extracellular side; that stretch reads HRDLGAS. Residues 267-289 traverse the membrane as a helical segment; that stretch reads VMVAKGCGQCLNFDCSFIAVLML. At 290 to 317 the chain is on the cytoplasmic side; the sequence is RRCLTWLRATWLAQVLPLDQNIQFHQLM. The Ferric oxidoreductase domain occupies 293–440; that stretch reads LTWLRATWLA…FLEKAIGLAV (148 aa). The helical transmembrane segment at 318–338 threads the bilayer; that stretch reads GYVVVGLSLVHTVAHTVNFVL. Topologically, residues 339–362 are extracellular; that stretch reads QAQAEASPFQFWELLLTTRPGIGW. The helical transmembrane segment at 363-383 threads the bilayer; the sequence is VHGSASPTGVALLLLLLLMFI. The Cytoplasmic segment spans residues 384–394; sequence CSSSCIRRSGH. Residues 395–417 traverse the membrane as a helical segment; that stretch reads FEVFYWTHLSYLLVWLLLIFHGP. 2 C-terminal catalytic dehydrogenase domain regions span residues 398 to 719 and 416 to 737; these read FYWT…GRPD and GPNF…KVQV. Topologically, residues 418–434 are extracellular; sequence NFWKWLLVPGILFFLEK. A helical transmembrane segment spans residues 435 to 455; sequence AIGLAVSRMAAVCIMEVNLLP. Residues 441–577 enclose the FAD-binding FR-type domain; that stretch reads SRMAAVCIME…DGPYGTPTRR (137 aa). Topologically, residues 456–583 are cytoplasmic; that stretch reads SKVTHLLIKR…PTRRIFASEH (128 aa). Phosphoserine; by CaMK2 is present on Asp-475. His-490 is subject to Phosphothreonine; by PKC/PRKCA. The residue at position 494 (Ile-494) is a Phosphothreonine; by CaMK2 and PKC/PRKCA. The residue at position 498 (Pro-498) is a Phosphoserine; by CaMK2 and PKC/PRKCA. Residue Asp-502 is modified to Phosphoserine; by CaMK2. An S-nitrosocysteine modification is found at Tyr-519. The helical transmembrane segment at 584–604 threads the bilayer; sequence AVLIGAGIGITPFASILQSIM. Over 605-765 the chain is Extracellular; that stretch reads YRHQKRKHTC…FGFRFFQENF (161 aa). Asp-659 bears the Phosphoserine; by CaMK2 mark. Leu-694 carries the post-translational modification S-nitrosocysteine.

Homooligomer. Requires FAD as cofactor. It depends on Mg(2+) as a cofactor. Phosphorylation at Ser-475 by CaMK2 and at Ser-490, Thr-494 and Ser-498 by PKC/PRKCA positively regulates its catalytic activity. In terms of processing, S-nitrosylation in response to nitric oxide inhibits its catalytic activity. As to expression, mainly expressed in pachytene spermatocytes of testis and in lymphocyte-rich areas of spleen and lymph nodes. Also detected in ovary, placenta, pancreas, cardiac fibroblasts. Expressed in B-cells and prostate malignant cells. Expressed in spleen. Expressed in endothelial cells, pulmonary artery smooth muscle cells and epithelial colorectal adenocarcinoma cells. In terms of tissue distribution, expressed in microvascular endothelial cells (at protein level). Expressed in testis. Expressed in endothelial cells and pulmonary artery smooth muscle cells. As to expression, expressed in pulmonary artery smooth muscle cells and epithelial colorectal adenocarcinoma cells. Expressed in endothelial cells and pulmonary artery smooth muscle cells. In terms of tissue distribution, expressed in microvascular endothelial cells (at protein level).

The protein localises to the endoplasmic reticulum. The protein resides in the cell membrane. The catalysed reaction is NADPH + 2 O2 = 2 superoxide + NADP(+) + H(+). With respect to regulation, activated by calcium which induces conformational changes and interaction between the N-terminal regulatory region and the C-terminal catalytic region. Inhibited by diphenylene iodonium. In terms of biological role, calcium-dependent NADPH oxidase that catalyzes the generation of superoxide from molecular oxygen utilizing NADPH as an electron donor. May play a role in cell growth and apoptosis. Calcium-dependent NADPH oxidase that catalyzes the generation of superoxide from molecular oxygen utilizing NADPH as an electron donor. Involved in endothelial generation of reactive oxygen species (ROS), proliferation and angiogenesis and contributes to endothelial response to thrombin. Regulates redox-dependent processes in lymphocytes and spermatozoa. Its function is as follows. Calcium-dependent NADPH oxidase that catalyzes the generation of superoxide from molecular oxygen utilizing NADPH as an electron donor. Functionally, this isoform lacks calcium-binding domains and was showed to present a NADPH oxidase activity in a calcium-independent manner. May be involved in endothelial generation of reactive oxygen species (ROS), proliferation and angiogenesis and contribute to endothelial response to thrombin. However another study showed an absence of oxidase activity. Subject to rapid degradation. In terms of biological role, lacks calcium-dependent NADPH oxidase activity. The chain is NADPH oxidase 5 from Homo sapiens (Human).